The sequence spans 125 residues: Large ribosomal subunit protein bL12 (125 aa).

The protein belongs to the bacterial ribosomal protein bL12 family. As to quaternary structure, homodimer. Part of the ribosomal stalk of the 50S ribosomal subunit. Forms a multimeric L10(L12)X complex, where L10 forms an elongated spine to which 2 to 4 L12 dimers bind in a sequential fashion. Binds GTP-bound translation factors.

Functionally, forms part of the ribosomal stalk which helps the ribosome interact with GTP-bound translation factors. Is thus essential for accurate translation. This chain is Large ribosomal subunit protein bL12, found in Variovorax paradoxus (strain S110).